The following is a 353-amino-acid chain: Rhodopsin (353 aa).

Residues 1–36 (MNGTEGPFFYVPMVNTTGIVRSPYEYPQYYLVNPAA) lie on the Extracellular side of the membrane. N-linked (GlcNAc...) asparagine glycans are attached at residues asparagine 2 and asparagine 15. A helical membrane pass occupies residues 37–61 (YAALGAYMFLLILVGFPINFLTLYV). Residues 62-73 (TIEHKKLRTPLN) lie on the Cytoplasmic side of the membrane. The helical transmembrane segment at 74–96 (YILLNLAVADLFMVLGGFTTTMY) threads the bilayer. The Extracellular segment spans residues 97–110 (TSMHGYFVLGRLGC). Cysteines 110 and 187 form a disulfide. The chain crosses the membrane as a helical span at residues 111–133 (NIEGFFATLGGEIALWSLVVLAI). Residues 134–136 (ERW) carry the 'Ionic lock' involved in activated form stabilization motif. Residues 134–152 (ERWVVVCKPISNFRFGENH) lie on the Cytoplasmic side of the membrane. A helical transmembrane segment spans residues 153–173 (AIMGLAFTWTMAMACAAPPLV). At 174–202 (GWSRYIPEGMQCSCGIDYYTRAEGFNNES) the chain is on the extracellular side. An N-linked (GlcNAc...) asparagine glycan is attached at asparagine 200. A helical membrane pass occupies residues 203–224 (FVIYMFICHFTIPLTVVFFCYG). Over 225–252 (RLLCAVKEAAAAQQESETTQRAEKEVTR) the chain is Cytoplasmic. A helical membrane pass occupies residues 253 to 274 (MVIMMVIAFLVCWLPYASVAWY). Residues 275 to 286 (IFTHQGSEFGPV) are Extracellular-facing. A helical transmembrane segment spans residues 287–308 (FMTIPAFFAKSSSIYNPMIYIC). N6-(retinylidene)lysine is present on lysine 296. Residues 309 to 353 (LNKQFRHCMITTLCCGKNPFEEEEGASTASKTEASSVSSSSVSPA) lie on the Cytoplasmic side of the membrane. 2 S-palmitoyl cysteine lipidation sites follow: cysteine 322 and cysteine 323. Residues 331–353 (EEGASTASKTEASSVSSSSVSPA) form a disordered region. A compositionally biased stretch (low complexity) spans 334–353 (ASTASKTEASSVSSSSVSPA).

Belongs to the G-protein coupled receptor 1 family. Opsin subfamily. Phosphorylated on some or all of the serine and threonine residues present in the C-terminal region. In terms of processing, contains one covalently linked retinal chromophore.

It is found in the membrane. It localises to the cell projection. The protein localises to the cilium. The protein resides in the photoreceptor outer segment. In terms of biological role, photoreceptor required for image-forming vision at low light intensity. While most salt water fish species use retinal as chromophore, most freshwater fish use 3-dehydroretinal, or a mixture of retinal and 3-dehydroretinal. Light-induced isomerization of 11-cis to all-trans retinal triggers a conformational change that activates signaling via G-proteins. Subsequent receptor phosphorylation mediates displacement of the bound G-protein alpha subunit by arrestin and terminates signaling. The sequence is that of Rhodopsin (rho) from Diplodus annularis (Annular seabream).